A 179-amino-acid polypeptide reads, in one-letter code: Endoribonuclease YbeY (179 aa).

Residues His148, His152, and His158 each coordinate Zn(2+).

The protein belongs to the endoribonuclease YbeY family. It depends on Zn(2+) as a cofactor.

It localises to the cytoplasm. Functionally, single strand-specific metallo-endoribonuclease involved in late-stage 70S ribosome quality control and in maturation of the 3' terminus of the 16S rRNA. The protein is Endoribonuclease YbeY of Prochlorococcus marinus (strain MIT 9215).